Reading from the N-terminus, the 94-residue chain is Acylphosphatase (94 aa).

The Acylphosphatase-like domain maps to 8 to 94 (TLFIIVHGKV…GRRFKHFAQH (87 aa)). Catalysis depends on residues arginine 23 and asparagine 41. Residues 69-94 (PPAASVTELESRREDGGRRFKHFAQH) are disordered. Over residues 77–86 (LESRREDGGR) the composition is skewed to basic and acidic residues.

This sequence belongs to the acylphosphatase family.

It carries out the reaction an acyl phosphate + H2O = a carboxylate + phosphate + H(+). This is Acylphosphatase (acyP) from Bordetella avium (strain 197N).